We begin with the raw amino-acid sequence, 332 residues long: Ribosomal RNA small subunit methyltransferase C (332 aa).

Belongs to the methyltransferase superfamily. RsmC family. Monomer.

It localises to the cytoplasm. The enzyme catalyses guanosine(1207) in 16S rRNA + S-adenosyl-L-methionine = N(2)-methylguanosine(1207) in 16S rRNA + S-adenosyl-L-homocysteine + H(+). Its function is as follows. Specifically methylates the guanine in position 1207 of 16S rRNA in the 30S particle. The polypeptide is Ribosomal RNA small subunit methyltransferase C (Pseudomonas fluorescens (strain ATCC BAA-477 / NRRL B-23932 / Pf-5)).